The chain runs to 595 residues: Protein kinase C iota type (595 aa).

A compositionally biased stretch (polar residues) spans 1-12 (MPTQRDSSTMSH). The segment at 1–21 (MPTQRDSSTMSHTVACGGGGD) is disordered. The residue at position 2 (P2) is an N-acetylproline. Residues 2-28 (PTQRDSSTMSHTVACGGGGDHSHQVRV) form a required for interaction with RAB2 region. The regulatory domain stretch occupies residues 2-252 (PTQRDSSTMS…KASSSLGLQD (251 aa)). A Phosphothreonine modification is found at T3. Residues S7 and S8 each carry the phosphoserine modification. T9 is modified (phosphothreonine). The 84-residue stretch at 25-108 (QVRVKAYYRG…SELLIHVFPC (84 aa)) folds into the PB1 domain. The interval 72–91 (DEEGDPCTVSSQLELEEAFR) is interaction with PARD6A. The short motif at 125–134 (YRRGARRWRK) is the Pseudosubstrate element. A Phorbol-ester/DAG-type zinc finger spans residues 140-190 (GHTFQAKRFNRRAHCAICTDRIWGLGRQGYKCINCKLLVHKKCHKLVTIEC). Positions 253–521 (FDLLRVIGRG…FADIQGHPFF (269 aa)) constitute a Protein kinase domain. 259-267 (IGRGSYAKV) is an ATP binding site. Phosphotyrosine; by SRC occurs at positions 264 and 279. Position 282 (K282) interacts with ATP. Position 333 is a phosphotyrosine; by SRC (Y333). Residue D377 is the Proton acceptor of the active site. A phosphothreonine mark is found at T411 and T563. The 72-residue stretch at 522–593 (RNVDWDMMEQ…INPLLMSAEE (72 aa)) folds into the AGC-kinase C-terminal domain.

It belongs to the protein kinase superfamily. AGC Ser/Thr protein kinase family. PKC subfamily. In terms of assembly, forms a complex with SQSTM1 and MP2K5. Interacts directly with SQSTM1. Interacts with IKBKB. Interacts with PARD6A, PARD6B and PARD6G. Part of a quaternary complex containing aPKC, PARD3, a PARD6 protein (PARD6A, PARD6B or PARD6G) and a GTPase protein (CDC42 or RAC1). Part of a complex with LLGL1 and PARD6B. Interacts with ADAP1/CENTA1. Interaction with SMG1, through the ZN-finger domain, activates the kinase activity. Interacts with CDK7. Forms a complex with RAB2A and GAPDH involved in recruitment onto the membrane of vesicular tubular clusters (VTCs). Interacts with ECT2 ('Thr-359' phosphorylated form). Interacts with VAMP2. Interacts with WDFY2 (via WD repeats 1-3). In terms of processing, phosphorylation at Thr-411 in the activation loop is not mandatory for activation. Upon neuronal growth factor (NGF) stimulation, phosphorylated by SRC at Tyr-264, Tyr-279 and Tyr-333. Phosphorylation on Tyr-264 facilitates binding to KPNB1/importin-beta regulating entry of PRKCI into the nucleus. Phosphorylation on Tyr-333 is important for NF-kappa-B stimulation. Phosphorylated at Thr-563 during the initial phase of long term potentiation.

It localises to the cytoplasm. It is found in the membrane. The protein localises to the endosome. The protein resides in the nucleus. The catalysed reaction is L-seryl-[protein] + ATP = O-phospho-L-seryl-[protein] + ADP + H(+). It carries out the reaction L-threonyl-[protein] + ATP = O-phospho-L-threonyl-[protein] + ADP + H(+). Atypical PKCs (PRKCI and PRKCZ) exhibit an elevated basal enzymatic activity (that may be due to the interaction with SMG1 or SQSTM1) and are not regulated by diacylglycerol, phosphatidylserine, phorbol esters or calcium ions. Two specific sites, Thr-411 (activation loop of the kinase domain) and Thr-563 (turn motif), need to be phosphorylated for its full activation. Might also be a target for novel lipid activators that are elevated during nutrient-stimulated insulin secretion. Functionally, calcium- and diacylglycerol-independent serine/ threonine-protein kinase that plays a general protective role against apoptotic stimuli, is involved in NF-kappa-B activation, cell survival, differentiation and polarity, and contributes to the regulation of microtubule dynamics in the early secretory pathway. Is necessary for BCR-ABL oncogene-mediated resistance to apoptotic drug in leukemia cells, protecting leukemia cells against drug-induced apoptosis. In cultured neurons, prevents amyloid beta protein-induced apoptosis by interrupting cell death process at a very early step. In glioblastoma cells, may function downstream of phosphatidylinositol 3-kinase (PI3K) and PDPK1 in the promotion of cell survival by phosphorylating and inhibiting the pro-apoptotic factor BAD. Can form a protein complex in non-small cell lung cancer (NSCLC) cells with PARD6A and ECT2 and regulate ECT2 oncogenic activity by phosphorylation, which in turn promotes transformed growth and invasion. In response to nerve growth factor (NGF), acts downstream of SRC to phosphorylate and activate IRAK1, allowing the subsequent activation of NF-kappa-B and neuronal cell survival. Functions in the organization of the apical domain in epithelial cells by phosphorylating EZR. This step is crucial for activation and normal distribution of EZR at the early stages of intestinal epithelial cell differentiation. Forms a protein complex with LLGL1 and PARD6B independently of PARD3 to regulate epithelial cell polarity. Plays a role in microtubule dynamics in the early secretory pathway through interaction with RAB2A and GAPDH and recruitment to vesicular tubular clusters (VTCs). In human coronary artery endothelial cells (HCAEC), is activated by saturated fatty acids and mediates lipid-induced apoptosis. Downstream of PI3K is required for insulin-stimulated glucose transport. Activates RAB4A and promotes its association with KIF3A which is required for the insulin-induced SLC2A4/GLUT4 translocation in adipocytes. Is essential in early embryogenesis and development of differentiating photoreceptors by playing a role in the establishment of epithelial and neuronal polarity. Involved in early synaptic long term potentiation phase in CA1 hippocampal cells and short term memory formation. The polypeptide is Protein kinase C iota type (Prkci) (Mus musculus (Mouse)).